The primary structure comprises 212 residues: 3-isopropylmalate dehydratase small subunit (212 aa).

Belongs to the LeuD family. LeuD type 1 subfamily. In terms of assembly, heterodimer of LeuC and LeuD.

The enzyme catalyses (2R,3S)-3-isopropylmalate = (2S)-2-isopropylmalate. The protein operates within amino-acid biosynthesis; L-leucine biosynthesis; L-leucine from 3-methyl-2-oxobutanoate: step 2/4. Its function is as follows. Catalyzes the isomerization between 2-isopropylmalate and 3-isopropylmalate, via the formation of 2-isopropylmaleate. This is 3-isopropylmalate dehydratase small subunit from Dechloromonas aromatica (strain RCB).